A 117-amino-acid polypeptide reads, in one-letter code: Large ribosomal subunit protein bL17 (117 aa).

It belongs to the bacterial ribosomal protein bL17 family. Part of the 50S ribosomal subunit. Contacts protein L32.

The protein is Large ribosomal subunit protein bL17 of Thermomicrobium roseum (strain ATCC 27502 / DSM 5159 / P-2).